The sequence spans 236 residues: Ubiquinone biosynthesis O-methyltransferase (236 aa).

Arg-39, Gly-59, Asp-80, and Met-124 together coordinate S-adenosyl-L-methionine.

This sequence belongs to the methyltransferase superfamily. UbiG/COQ3 family.

The catalysed reaction is a 3-demethylubiquinol + S-adenosyl-L-methionine = a ubiquinol + S-adenosyl-L-homocysteine + H(+). It carries out the reaction a 3-(all-trans-polyprenyl)benzene-1,2-diol + S-adenosyl-L-methionine = a 2-methoxy-6-(all-trans-polyprenyl)phenol + S-adenosyl-L-homocysteine + H(+). The protein operates within cofactor biosynthesis; ubiquinone biosynthesis. Its function is as follows. O-methyltransferase that catalyzes the 2 O-methylation steps in the ubiquinone biosynthetic pathway. This is Ubiquinone biosynthesis O-methyltransferase from Shewanella sp. (strain MR-7).